The following is a 608-amino-acid chain: 65-kDa microtubule-associated protein 6 (608 aa).

3 coiled-coil regions span residues 164–186 (DLTLRNLNEYQTHLRTLQKEKSD), 368–388 (ELLANIEMQINKIKDEAQSRK), and 467–503 (VRLVNILEDYKLTRKQQEEEKKRYRDQKKRQDLLLTQ). The disordered stretch occupies residues 501 to 565 (LTQRESIYGS…RSYSGHHRQN (65 aa)). The span at 510–523 (SKPSPRRSSSFRKP) shows a compositional bias: low complexity. Ser-513 is modified (phosphoserine). Polar residues predominate over residues 526–535 (FNISNGNGSV). Ser-604 carries the post-translational modification Phosphoserine.

It belongs to the MAP65/ASE1 family. In terms of assembly, forms a dimer. Binds to polymerized centrally located endocytic MT.

It localises to the nucleus. The protein localises to the cytoplasm. Its subcellular location is the mitochondrion. It is found in the cytoskeleton. The protein resides in the phragmoplast. In terms of biological role, microtubule-associated protein that mediates the formation of a mesh-like stable and dense network formed by individual microtubules (MT). Confers MT resistance to high concentration of NaCl. The chain is 65-kDa microtubule-associated protein 6 (MAP65-6) from Arabidopsis thaliana (Mouse-ear cress).